Reading from the N-terminus, the 236-residue chain is SPbeta prophage-derived uncharacterized lipoprotein YokB (236 aa).

A signal peptide spans 1–19 (MNIRFSMLVCVSFIFFTGG). Residue C20 is the site of N-palmitoyl cysteine attachment. C20 carries the S-diacylglycerol cysteine lipid modification. Disordered regions lie at residues 23 to 59 (SSAN…TPNM) and 204 to 236 (VKKV…KDNK). A compositionally biased stretch (basic and acidic residues) spans 31–53 (SKNKNESKEESSEEGVKENDNKL).

The protein localises to the cell membrane. This is SPbeta prophage-derived uncharacterized lipoprotein YokB (yokB) from Bacillus subtilis (strain 168).